The chain runs to 225 residues: Ribosomal RNA small subunit methyltransferase G (225 aa).

S-adenosyl-L-methionine is bound by residues Gly89, Leu94, 140–141, and Arg157; that span reads IE.

Belongs to the methyltransferase superfamily. RNA methyltransferase RsmG family.

It localises to the cytoplasm. It carries out the reaction guanosine(527) in 16S rRNA + S-adenosyl-L-methionine = N(7)-methylguanosine(527) in 16S rRNA + S-adenosyl-L-homocysteine. Functionally, specifically methylates the N7 position of guanine in position 527 of 16S rRNA. The sequence is that of Ribosomal RNA small subunit methyltransferase G from Psychrobacter sp. (strain PRwf-1).